Reading from the N-terminus, the 211-residue chain is Probable septum site-determining protein MinC (211 aa).

This sequence belongs to the MinC family. Interacts with MinD and FtsZ.

Functionally, cell division inhibitor that blocks the formation of polar Z ring septums. Rapidly oscillates between the poles of the cell to destabilize FtsZ filaments that have formed before they mature into polar Z rings. Prevents FtsZ polymerization. This Clostridium acetobutylicum (strain ATCC 824 / DSM 792 / JCM 1419 / IAM 19013 / LMG 5710 / NBRC 13948 / NRRL B-527 / VKM B-1787 / 2291 / W) protein is Probable septum site-determining protein MinC.